The following is a 257-amino-acid chain: Imidazole glycerol phosphate synthase subunit HisF (257 aa).

Residues aspartate 11 and aspartate 130 contribute to the active site.

The protein belongs to the HisA/HisF family. Heterodimer of HisH and HisF.

Its subcellular location is the cytoplasm. It carries out the reaction 5-[(5-phospho-1-deoxy-D-ribulos-1-ylimino)methylamino]-1-(5-phospho-beta-D-ribosyl)imidazole-4-carboxamide + L-glutamine = D-erythro-1-(imidazol-4-yl)glycerol 3-phosphate + 5-amino-1-(5-phospho-beta-D-ribosyl)imidazole-4-carboxamide + L-glutamate + H(+). It functions in the pathway amino-acid biosynthesis; L-histidine biosynthesis; L-histidine from 5-phospho-alpha-D-ribose 1-diphosphate: step 5/9. Its function is as follows. IGPS catalyzes the conversion of PRFAR and glutamine to IGP, AICAR and glutamate. The HisF subunit catalyzes the cyclization activity that produces IGP and AICAR from PRFAR using the ammonia provided by the HisH subunit. This chain is Imidazole glycerol phosphate synthase subunit HisF, found in Shewanella sp. (strain W3-18-1).